Reading from the N-terminus, the 1061-residue chain is Lysine-specific demethylase jmjd-3.1 (1061 aa).

Disordered regions lie at residues 30-49 and 256-417; these read VKNSQETPPFPGMNSTMRPV and KSLS…KRRT. Residues 271-287 are compositionally biased toward polar residues; it reads QHTNSVGSSIGTTSGDS. Over residues 310-320 the composition is skewed to low complexity; the sequence is STSSEFTETTS. Residues 321–330 are compositionally biased toward polar residues; it reads VANQTESNAG. Positions 369 to 417 are required for nuclear localization; sequence KKKEQSATEPPIPRTKRAYTKNPNTIRKRRMKKNQSDDEEDDGPPKRRT. The interval 418–759 is required for binding of unc-3 and for function in Y-to-PDA transdifferentiation; it reads INYQIEFRDA…FGTNIDLLSE (342 aa). The region spanning 760 to 923 is the JmjC domain; the sequence is NFKKQMNEIE…LATSIVAHDH (164 aa). Fe cation is bound by residues His811, Glu813, and His891. The Zn(2+) site is built by Cys998, Cys1001, Cys1025, and Cys1028.

This sequence belongs to the UTX family. As to quaternary structure, interacts with wdr-5.1 and unc-3. Requires Fe(2+) as cofactor. In terms of tissue distribution, mainly expressed in head and tail.

It localises to the nucleus. Its function is as follows. Histone demethylase that specifically demethylates trimethylated 'Lys-27' of histone H3, a mark associated with transcriptional repression, thereby playing a central role in the histone code. Involved in the transcriptional regulation of the heat shock response, unfolded protein response and possibly other stress response target genes. Required for gonad development and organization. Required for the robust transdifferentiation of the Y rectal epithelial cell to the PDA motor neuron during larval development. Acts cell-autonomously in Y-to-PDA transdifferentiation, which depends on the demethylase activity and on recognition of the H3 tail. Cooperates with set-2 and unc-3 to ensure robust Y-to-PDA transdifferentiation. Promotes mitochondrial stress-induced longevity. Involved in lifespan regulation. The polypeptide is Lysine-specific demethylase jmjd-3.1 (Caenorhabditis elegans).